The primary structure comprises 355 residues: MSMAECTREQRKRRGAGRADEHWRTLSPASCAADALTEHISPAYAHLIAQAQGADAQALKRQVCFAPQERVVHACECADPLGEDRYCVTPFLVHQYANRVLMLATGRCFSHCRYCFRRGFIAQRAGWIPNEEREKIITYLRATPSVKEILVSGGDPLTGSFAQVTSLFRALRSVAPDLIIRLCTRAVTFAPQAFTPELIAFLQEMKPVWIIPHINHPAELGSTQRAVLEACVGAGLPVQSQSVLLRGVNDSVETLCTLFHALTCLGVKPGYLFQLDLAPGTGDFRVPLSDTLALWRTLKERLSGLSLPTLAVDLPGGGGKFPLVALALQQDVTWHQEREAFSARGIDGAWYTYPF.

The region spanning 93 to 308 (VHQYANRVLM…KERLSGLSLP (216 aa)) is the Radical SAM core domain. Positions 108, 112, and 115 each coordinate [4Fe-4S] cluster. K320 carries the post-translational modification N6-(pyridoxal phosphate)lysine.

This sequence belongs to the radical SAM superfamily. KamA family. The cofactor is [4Fe-4S] cluster. Pyridoxal 5'-phosphate is required as a cofactor.

The sequence is that of Putative L-lysine 2,3-aminomutase from Treponema pallidum (strain Nichols).